Here is a 189-residue protein sequence, read N- to C-terminus: Elongation factor P (189 aa).

Lys35 is subject to N6-(3,6-diaminohexanoyl)-5-hydroxylysine.

The protein belongs to the elongation factor P family. May be beta-lysylated on the epsilon-amino group of Lys-35 by the combined action of EpmA and EpmB, and then hydroxylated on the C5 position of the same residue by EpmC (if this protein is present). Lysylation is critical for the stimulatory effect of EF-P on peptide-bond formation. The lysylation moiety may extend toward the peptidyltransferase center and stabilize the terminal 3-CCA end of the tRNA. Hydroxylation of the C5 position on Lys-35 may allow additional potential stabilizing hydrogen-bond interactions with the P-tRNA.

It is found in the cytoplasm. It participates in protein biosynthesis; polypeptide chain elongation. Its function is as follows. Involved in peptide bond synthesis. Alleviates ribosome stalling that occurs when 3 or more consecutive Pro residues or the sequence PPG is present in a protein, possibly by augmenting the peptidyl transferase activity of the ribosome. Modification of Lys-35 is required for alleviation. The polypeptide is Elongation factor P (Wigglesworthia glossinidia brevipalpis).